The following is a 242-amino-acid chain: Probable 2-phosphosulfolactate phosphatase (242 aa).

This sequence belongs to the ComB family. Mg(2+) serves as cofactor.

The enzyme catalyses (2R)-O-phospho-3-sulfolactate + H2O = (2R)-3-sulfolactate + phosphate. In Picosynechococcus sp. (strain ATCC 27264 / PCC 7002 / PR-6) (Agmenellum quadruplicatum), this protein is Probable 2-phosphosulfolactate phosphatase.